The chain runs to 306 residues: Stimulator of interferon genes protein 5 (306 aa).

A disordered region spans residues 1–50 (MMSNDSQSEKRTAKWTGSGTPIAEGEESSSPSAHQTRQKATAADDDDDQQ). Tyr-119, Arg-180, and Arg-186 together coordinate 2',3'-cGAMP.

The protein belongs to the STING family.

Its function is as follows. Facilitator of innate immune signaling that acts as a sensor of second messenger signals produced by cyclic GMP-AMP synthase-like receptors (cGLRs) and promotes the production of type I interferon. Innate immune response is triggered in response to nucleotides from viruses and bacteria delivered to the cytoplasm. Acts by binding cyclic dinucleotides: recognizes and binds 2'-3' linked cGAMP (2'-3'-cGAMP), a second messengers produced by cGLRs in response to nucleotides in the cytosol, such as double-stranded RNA (dsRNA). Upon binding to 2'-3'-cGAMP, oligomerizes and promotes the recruitment and subsequent activation of the transcription factor IRF3 to induce expression of type I interferon. This chain is Stimulator of interferon genes protein 5, found in Stylophora pistillata (Smooth cauliflower coral).